The following is a 476-amino-acid chain: Protein transport protein SEC61 subunit alpha (476 aa).

The Cytoplasmic segment spans residues 1–33 (MSSLRFLDLVKPFVPFLPEVQQPETKIPFNQKL). Residues 34–54 (MWTGLTLLIFLVMSQMPLYGI) form a helical membrane-spanning segment. Residues 55 to 76 (VSSDTSDPLYWLRMMMASNRGT) are Lumenal-facing. A helical membrane pass occupies residues 77 to 97 (LMELGITPIISSGMVFQLLAG). Topologically, residues 98 to 119 (THMIDVNLDLKADRELYQTAQK) are cytoplasmic. Residues 120–140 (LFAVILSIGTATVYVFTGLYG) form a helical membrane-spanning segment. Residues 141-146 (PPSDLG) are Lumenal-facing. The chain crosses the membrane as a helical span at residues 147–167 (AGIVFLLILQLVVAGMIVILL). Topologically, residues 168–246 (DELLQKGYGL…YRQNLPNIMN (79 aa)) are cytoplasmic. A helical membrane pass occupies residues 247–267 (LLATLVVFAAVIYLQGFRVEI). Residues 268-361 (PVKSSRQRGA…KDALLDPIHT (94 aa)) are Lumenal-facing. Residues 362 to 382 (AVYIAYMLTACAVFSKTWIEV) form a helical membrane-spanning segment. The Cytoplasmic portion of the chain corresponds to 383–415 (SGSSPRDVAKQLKDQGLVMAGHREQSMYKELKR). The chain crosses the membrane as a helical span at residues 416 to 434 (IIPTAAAFGGACIGALSVA). Residues 435–440 (SDLMGA) are Lumenal-facing. The helical transmembrane segment at 441–458 (LGSGTGTLLAVTIIYGYF) threads the bilayer. Topologically, residues 459-476 (EIAAKEGDLQGMKGMIMG) are cytoplasmic.

Belongs to the SecY/SEC61-alpha family. As to quaternary structure, heterotrimeric complex composed of SEC61-alpha, SEC61-beta and SEC61-gamma.

The protein localises to the endoplasmic reticulum membrane. Appears to play a crucial role in the insertion of secretory and membrane polypeptides into the ER. It is required for assembly of membrane and secretory proteins and is essential for cell growth. It interacts with other membrane proteins required for protein translocation. Upon binding to SEC62/63 complex, secretory precursor polypeptides may engage SEC61 to begin membrane penetration event. A cycle of assembly and disassembly of SEC62/63 from SEC61 may govern the activity of the translocase. The sequence is that of Protein transport protein SEC61 subunit alpha (sec-61) from Neurospora crassa (strain ATCC 24698 / 74-OR23-1A / CBS 708.71 / DSM 1257 / FGSC 987).